The following is a 366-amino-acid chain: Terpene synthase 4 (366 aa).

The DDxx(x)D/E motif signature appears at 91 to 96; the sequence is DDFLER. An NDxxSxxxD/E motif motif is present at residues 241 to 249; it reads NDCVSYAKE.

Belongs to the terpene synthase family.

It catalyses the reaction (2E,6E)-farnesyl diphosphate = (1S,2S,4R)-beta-elemene + diphosphate. Terpene synthase that converts its substrate farnesyl diphosphate (FPP) into the sesquiterpenes bicycloelemene, beta-elemene and 2 yet unidentified sesquiterpenes. This is Terpene synthase 4 from Dictyostelium purpureum (Slime mold).